The chain runs to 613 residues: Portal protein (613 aa).

The tract at residues Ala577–Ser613 is disordered. Residues Gly592–Arg605 are compositionally biased toward basic and acidic residues.

Belongs to the herpesviridae portal protein family. As to quaternary structure, homododecamerizes. Interacts with terminase subunits TRM1 and TRM3.

It localises to the virion. The protein localises to the host nucleus. Its function is as follows. Forms a portal in the viral capsid through which viral DNA is translocated during DNA packaging. Assembles as a dodecamer at a single fivefold axe of the T=16 icosahedric capsid. Binds to the molecular motor that translocates the viral DNA, termed terminase. The protein is Portal protein of Homo sapiens (Human).